Consider the following 157-residue polypeptide: Thiocyanate hydrolase subunit beta (157 aa).

In terms of assembly, heterododecamer consisting of 4 alpha, 4 beta, and 4 gamma subunits.

It carries out the reaction thiocyanate + H2O + 2 H(+) = carbonyl sulfide + NH4(+). Its pathway is organosulfur degradation; thiocyanate degradation. Functionally, involved in the degradation of thiocyanate. The sequence is that of Thiocyanate hydrolase subunit beta (scnB) from Thiobacillus thioparus.